We begin with the raw amino-acid sequence, 215 residues long: Pyridoxine/pyridoxamine 5'-phosphate oxidase (215 aa).

Residues 9–12 (RRDY) and Lys67 each bind substrate. FMN contacts are provided by residues 62–67 (RVVLLK), 77–78 (FT), Lys84, and Gln106. Residues Tyr124, Arg128, and Ser132 each contribute to the substrate site. FMN is bound by residues 141 to 142 (QS) and Trp186. 192 to 194 (RLH) is a binding site for substrate. Arg196 is an FMN binding site.

The protein belongs to the pyridoxamine 5'-phosphate oxidase family. In terms of assembly, homodimer. The cofactor is FMN.

The catalysed reaction is pyridoxamine 5'-phosphate + O2 + H2O = pyridoxal 5'-phosphate + H2O2 + NH4(+). The enzyme catalyses pyridoxine 5'-phosphate + O2 = pyridoxal 5'-phosphate + H2O2. It participates in cofactor metabolism; pyridoxal 5'-phosphate salvage; pyridoxal 5'-phosphate from pyridoxamine 5'-phosphate: step 1/1. Its pathway is cofactor metabolism; pyridoxal 5'-phosphate salvage; pyridoxal 5'-phosphate from pyridoxine 5'-phosphate: step 1/1. Its function is as follows. Catalyzes the oxidation of either pyridoxine 5'-phosphate (PNP) or pyridoxamine 5'-phosphate (PMP) into pyridoxal 5'-phosphate (PLP). The chain is Pyridoxine/pyridoxamine 5'-phosphate oxidase from Chromohalobacter salexigens (strain ATCC BAA-138 / DSM 3043 / CIP 106854 / NCIMB 13768 / 1H11).